We begin with the raw amino-acid sequence, 166 residues long: Large ribosomal subunit protein uL10 (166 aa).

Belongs to the universal ribosomal protein uL10 family. As to quaternary structure, part of the ribosomal stalk of the 50S ribosomal subunit. The N-terminus interacts with L11 and the large rRNA to form the base of the stalk. The C-terminus forms an elongated spine to which L12 dimers bind in a sequential fashion forming a multimeric L10(L12)X complex.

Forms part of the ribosomal stalk, playing a central role in the interaction of the ribosome with GTP-bound translation factors. In Streptococcus pyogenes serotype M18 (strain MGAS8232), this protein is Large ribosomal subunit protein uL10 (rplJ).